The sequence spans 92 residues: MSEANVNKKEKGARKVRTGYVVSDKMQKTIVVELEDRKSHAKYGKTIRTNSKVKAHDEKEIAGIGDLVRIEETRPLSKDKHFRLVEIVEKAK.

This sequence belongs to the universal ribosomal protein uS17 family. Part of the 30S ribosomal subunit.

In terms of biological role, one of the primary rRNA binding proteins, it binds specifically to the 5'-end of 16S ribosomal RNA. This Corynebacterium diphtheriae (strain ATCC 700971 / NCTC 13129 / Biotype gravis) protein is Small ribosomal subunit protein uS17.